The chain runs to 437 residues: Enolase (437 aa).

Residue Gln162 participates in (2R)-2-phosphoglycerate binding. Catalysis depends on Glu204, which acts as the Proton donor. Mg(2+)-binding residues include Asp251, Glu297, and Asp324. Positions 349, 378, 379, and 400 each coordinate (2R)-2-phosphoglycerate. Catalysis depends on Lys349, which acts as the Proton acceptor.

The protein belongs to the enolase family. It depends on Mg(2+) as a cofactor.

The protein localises to the cytoplasm. It is found in the secreted. Its subcellular location is the cell surface. The catalysed reaction is (2R)-2-phosphoglycerate = phosphoenolpyruvate + H2O. The protein operates within carbohydrate degradation; glycolysis; pyruvate from D-glyceraldehyde 3-phosphate: step 4/5. Functionally, catalyzes the reversible conversion of 2-phosphoglycerate (2-PG) into phosphoenolpyruvate (PEP). It is essential for the degradation of carbohydrates via glycolysis. The polypeptide is Enolase (Prosthecochloris aestuarii (strain DSM 271 / SK 413)).